The chain runs to 308 residues: tRNA dimethylallyltransferase (308 aa).

An ATP-binding site is contributed by G11–S18. T13–S18 contributes to the substrate binding site. The tract at residues D36–Q39 is interaction with substrate tRNA.

This sequence belongs to the IPP transferase family. In terms of assembly, monomer. Mg(2+) serves as cofactor.

It catalyses the reaction adenosine(37) in tRNA + dimethylallyl diphosphate = N(6)-dimethylallyladenosine(37) in tRNA + diphosphate. Its function is as follows. Catalyzes the transfer of a dimethylallyl group onto the adenine at position 37 in tRNAs that read codons beginning with uridine, leading to the formation of N6-(dimethylallyl)adenosine (i(6)A). The polypeptide is tRNA dimethylallyltransferase (Bdellovibrio bacteriovorus (strain ATCC 15356 / DSM 50701 / NCIMB 9529 / HD100)).